We begin with the raw amino-acid sequence, 241 residues long: Phosducin-like protein 2 (241 aa).

The Phosducin domain maps to 34–202 (VLRLQKEAMV…EWKLAEVGAI (169 aa)). Residues 89-241 (FGELREISGN…DSSNSDNDTK (153 aa)) form a thioredoxin fold region.

Belongs to the phosducin family. Interacts with the CCT chaperonin complex and actin. Testis-specific.

Its subcellular location is the endoplasmic reticulum. In terms of biological role, essential for male fertility, spermiogenesis and acrosome formation. The protein is Phosducin-like protein 2 (PDCL2) of Homo sapiens (Human).